Reading from the N-terminus, the 117-residue chain is MSPRKTYILKLYVAGNTPNSMRALTTLREILQTDFKGVYALKVIDVLKNPQLAEEDKILATPTLAKILPPPVRRIIGDLSDRERVLIGLDLLFEELSESDFFSGSPDSEFSSDEGKS.

This sequence belongs to the KaiB family. May undergo a major conformational rearrangment; in the free state forms homooligomers. When bound to KaiC switches to a monomeric thioredoxin-fold (KaiB(fs)). The active oscillator complex is probably KaiC(6):KaiB(6).

Functionally, component of the KaiBC clock protein complex, which constitutes the main circadian regulator in cyanobacteria; it may modify the ATPase activity of KaiC. May be a metamorphic protein which reversibly switches between an inactive tetrameric fold and a rare, thioredoxin-like monomeric fold (KaiB(fs)). KaiB(fs) binds phospho-KaiC, and perhaps clock output effectors. The sequence is that of Circadian clock oscillator protein KaiB from Prochlorococcus marinus (strain SARG / CCMP1375 / SS120).